We begin with the raw amino-acid sequence, 360 residues long: Dihydroorotate dehydrogenase (quinone) (360 aa).

FMN is bound by residues 65-69 (AGLDK) and T89. Position 69 (K69) interacts with substrate. Position 114–118 (114–118 (NRLGF)) interacts with substrate. Positions 147 and 180 each coordinate FMN. Substrate is bound at residue N180. Residue S183 is the Nucleophile of the active site. N185 contributes to the substrate binding site. Residues K225 and T253 each coordinate FMN. Position 254–255 (254–255 (NT)) interacts with substrate. Residues G276, G305, and 326-327 (YT) contribute to the FMN site.

Belongs to the dihydroorotate dehydrogenase family. Type 2 subfamily. In terms of assembly, monomer. FMN serves as cofactor.

It localises to the cell membrane. The catalysed reaction is (S)-dihydroorotate + a quinone = orotate + a quinol. Its pathway is pyrimidine metabolism; UMP biosynthesis via de novo pathway; orotate from (S)-dihydroorotate (quinone route): step 1/1. Its function is as follows. Catalyzes the conversion of dihydroorotate to orotate with quinone as electron acceptor. In Verminephrobacter eiseniae (strain EF01-2), this protein is Dihydroorotate dehydrogenase (quinone).